Reading from the N-terminus, the 84-residue chain is MDITKNIVTLLLVVLFPILFYYNNVLAFPASDQSIYARCIGPCPRYAVPHWCENECLSRKYMAGGECAFIEGEGPTPRCCCINL.

An N-terminal signal peptide occupies residues 1–27 (MDITKNIVTLLLVVLFPILFYYNNVLA). 4 disulfides stabilise this stretch: Cys39-Cys81, Cys43-Cys67, Cys52-Cys79, and Cys56-Cys80.

It belongs to the DEFL family.

Its subcellular location is the secreted. In Arabidopsis thaliana (Mouse-ear cress), this protein is Putative defensin-like protein 101.